Consider the following 412-residue polypeptide: Histidine--tRNA ligase (412 aa).

It belongs to the class-II aminoacyl-tRNA synthetase family. In terms of assembly, homodimer.

It localises to the cytoplasm. The catalysed reaction is tRNA(His) + L-histidine + ATP = L-histidyl-tRNA(His) + AMP + diphosphate + H(+). This chain is Histidine--tRNA ligase, found in Maridesulfovibrio salexigens (strain ATCC 14822 / DSM 2638 / NCIMB 8403 / VKM B-1763) (Desulfovibrio salexigens).